Reading from the N-terminus, the 150-residue chain is Ribosomal RNA large subunit methyltransferase H (150 aa).

S-adenosyl-L-methionine is bound by residues L71, G100, and 118–123 (FSQMTF).

This sequence belongs to the RNA methyltransferase RlmH family. Homodimer.

It is found in the cytoplasm. The enzyme catalyses pseudouridine(1915) in 23S rRNA + S-adenosyl-L-methionine = N(3)-methylpseudouridine(1915) in 23S rRNA + S-adenosyl-L-homocysteine + H(+). Its function is as follows. Specifically methylates the pseudouridine at position 1915 (m3Psi1915) in 23S rRNA. The sequence is that of Ribosomal RNA large subunit methyltransferase H from Mycoplasmopsis agalactiae (strain NCTC 10123 / CIP 59.7 / PG2) (Mycoplasma agalactiae).